A 514-amino-acid chain; its full sequence is Type-2 serine--tRNA ligase (514 aa).

Residue Ala-313 coordinates L-serine. Zn(2+) is bound at residue Cys-315. Arg-344 is an L-serine binding site. ATP contacts are provided by residues 344–346 (RWE) and 355–356 (RV). Position 361–363 (361–363 (RGE)) interacts with L-serine. Zn(2+)-binding residues include Glu-363 and Cys-470. Residue Arg-477 coordinates ATP.

The protein belongs to the class-II aminoacyl-tRNA synthetase family. Type-2 seryl-tRNA synthetase subfamily. Homodimer. Requires Zn(2+) as cofactor.

It is found in the cytoplasm. It carries out the reaction tRNA(Ser) + L-serine + ATP = L-seryl-tRNA(Ser) + AMP + diphosphate + H(+). It catalyses the reaction tRNA(Sec) + L-serine + ATP = L-seryl-tRNA(Sec) + AMP + diphosphate + H(+). It participates in aminoacyl-tRNA biosynthesis; selenocysteinyl-tRNA(Sec) biosynthesis; L-seryl-tRNA(Sec) from L-serine and tRNA(Sec): step 1/1. Functionally, catalyzes the attachment of serine to tRNA(Ser). Is also able to aminoacylate tRNA(Sec) with serine, to form the misacylated tRNA L-seryl-tRNA(Sec), which will be further converted into selenocysteinyl-tRNA(Sec). In Methanococcus maripaludis (strain DSM 14266 / JCM 13030 / NBRC 101832 / S2 / LL), this protein is Type-2 serine--tRNA ligase (serS).